Reading from the N-terminus, the 82-residue chain is MLKIRLTRIGAPKKPCYRIIVTEARSPRDATYTDLVGTYNPMTNPETVVINAEKALYWIGKGAQPTDTVARLLKKAGVVNSN.

This sequence belongs to the bacterial ribosomal protein bS16 family.

The chain is Small ribosomal subunit protein bS16 from Dehalococcoides mccartyi (strain ATCC BAA-2266 / KCTC 15142 / 195) (Dehalococcoides ethenogenes (strain 195)).